The chain runs to 85 residues: Large ribosomal subunit protein bL27 (85 aa).

It belongs to the bacterial ribosomal protein bL27 family.

This is Large ribosomal subunit protein bL27 from Xylella fastidiosa (strain Temecula1 / ATCC 700964).